Here is a 292-residue protein sequence, read N- to C-terminus: Chondroitin proteoglycan 3 (292 aa).

A signal peptide spans 1-17 (MRFVFIIALLLIGASLA). Positions 28–103 (DVSASEDEFS…EGSGDTSPVV (76 aa)) are disordered. Low complexity predominate over residues 38 to 80 (GDSSGEISGESSGEASGEASGEASGEASGEASGESSGETSGES). Positions 81–96 (SGDEETSGEGSGEEGS) are enriched in acidic residues. Asparagine 174 and asparagine 254 each carry an N-linked (GlcNAc...) asparagine glycan.

The polypeptide is Chondroitin proteoglycan 3 (Caenorhabditis elegans).